The chain runs to 78 residues: Protein SlyX homolog (78 aa).

The protein belongs to the SlyX family.

In Xanthomonas campestris pv. campestris (strain 8004), this protein is Protein SlyX homolog.